The chain runs to 484 residues: Aspartyl/glutamyl-tRNA(Asn/Gln) amidotransferase subunit B (484 aa).

This sequence belongs to the GatB/GatE family. GatB subfamily. As to quaternary structure, heterotrimer of A, B and C subunits.

It carries out the reaction L-glutamyl-tRNA(Gln) + L-glutamine + ATP + H2O = L-glutaminyl-tRNA(Gln) + L-glutamate + ADP + phosphate + H(+). The enzyme catalyses L-aspartyl-tRNA(Asn) + L-glutamine + ATP + H2O = L-asparaginyl-tRNA(Asn) + L-glutamate + ADP + phosphate + 2 H(+). Functionally, allows the formation of correctly charged Asn-tRNA(Asn) or Gln-tRNA(Gln) through the transamidation of misacylated Asp-tRNA(Asn) or Glu-tRNA(Gln) in organisms which lack either or both of asparaginyl-tRNA or glutaminyl-tRNA synthetases. The reaction takes place in the presence of glutamine and ATP through an activated phospho-Asp-tRNA(Asn) or phospho-Glu-tRNA(Gln). The protein is Aspartyl/glutamyl-tRNA(Asn/Gln) amidotransferase subunit B of Bordetella pertussis (strain Tohama I / ATCC BAA-589 / NCTC 13251).